Reading from the N-terminus, the 51-residue chain is Lysis protein for colicin A (51 aa).

The N-terminal stretch at 1-18 (MKKIIICVILLAIMLLAA) is a signal peptide. Residue Cys19 is the site of N-palmitoyl cysteine attachment. Residue Cys19 is the site of S-diacylglycerol cysteine attachment. A disordered region spans residues 27–51 (TGGGSVSPSSIVTGVSMGSDGVGNP).

The protein resides in the cell outer membrane. Functionally, lysis proteins are required for both colicin release and partial cell lysis. This is Lysis protein for colicin A (cal) from Citrobacter freundii.